We begin with the raw amino-acid sequence, 205 residues long: Outer-membrane lipoprotein LolB (205 aa).

A signal peptide spans 1-17 (MFLRHCITFTMIALLAG). Residue C18 is the site of N-palmitoyl cysteine attachment. C18 carries S-diacylglycerol cysteine lipidation.

The protein belongs to the LolB family. In terms of assembly, monomer.

Its subcellular location is the cell outer membrane. In terms of biological role, plays a critical role in the incorporation of lipoproteins in the outer membrane after they are released by the LolA protein. In Pseudomonas putida (strain ATCC 700007 / DSM 6899 / JCM 31910 / BCRC 17059 / LMG 24140 / F1), this protein is Outer-membrane lipoprotein LolB.